The primary structure comprises 367 residues: Protein RecA (367 aa).

73 to 80 (GPESSGKT) contacts ATP.

It belongs to the RecA family.

It localises to the cytoplasm. In terms of biological role, can catalyze the hydrolysis of ATP in the presence of single-stranded DNA, the ATP-dependent uptake of single-stranded DNA by duplex DNA, and the ATP-dependent hybridization of homologous single-stranded DNAs. It interacts with LexA causing its activation and leading to its autocatalytic cleavage. The chain is Protein RecA from Delftia acidovorans (strain DSM 14801 / SPH-1).